A 103-amino-acid chain; its full sequence is Large ribosomal subunit protein bL21 (103 aa).

Belongs to the bacterial ribosomal protein bL21 family. In terms of assembly, part of the 50S ribosomal subunit. Contacts protein L20.

This protein binds to 23S rRNA in the presence of protein L20. The sequence is that of Large ribosomal subunit protein bL21 from Escherichia coli O127:H6 (strain E2348/69 / EPEC).